The sequence spans 72 residues: Conotoxin VnMKLT2-021 (72 aa).

The first 22 residues, 1 to 22 (MKLTCVLIVAVLFLTACQLTTA), serve as a signal peptide directing secretion. The propeptide occupies 23–45 (ASYARSEREHPDLGSSDQNSKLT). The interval 25-44 (YARSEREHPDLGSSDQNSKL) is disordered. 3 disulfide bridges follow: Cys-48–Cys-62, Cys-55–Cys-66, and Cys-61–Cys-71.

It belongs to the conotoxin O1 superfamily. Expressed by the venom duct.

It is found in the secreted. This is Conotoxin VnMKLT2-021 from Conus ventricosus (Mediterranean cone).